The chain runs to 293 residues: Bifunctional protein FolD (293 aa).

NADP(+)-binding positions include 164-166, S193, and T234; that span reads GRS.

It belongs to the tetrahydrofolate dehydrogenase/cyclohydrolase family. Homodimer.

The enzyme catalyses (6R)-5,10-methylene-5,6,7,8-tetrahydrofolate + NADP(+) = (6R)-5,10-methenyltetrahydrofolate + NADPH. The catalysed reaction is (6R)-5,10-methenyltetrahydrofolate + H2O = (6R)-10-formyltetrahydrofolate + H(+). It participates in one-carbon metabolism; tetrahydrofolate interconversion. Functionally, catalyzes the oxidation of 5,10-methylenetetrahydrofolate to 5,10-methenyltetrahydrofolate and then the hydrolysis of 5,10-methenyltetrahydrofolate to 10-formyltetrahydrofolate. The polypeptide is Bifunctional protein FolD (Bacteroides thetaiotaomicron (strain ATCC 29148 / DSM 2079 / JCM 5827 / CCUG 10774 / NCTC 10582 / VPI-5482 / E50)).